Consider the following 384-residue polypeptide: Carbamoyl phosphate synthase small chain (384 aa).

Residues 1–189 (MSKSALLVLE…GLPEAKDDSE (189 aa)) are CPSase. Ser47, Gly241, and Gly243 together coordinate L-glutamine. In terms of domain architecture, Glutamine amidotransferase type-1 spans 193-380 (HVVAYDFGAK…IELIKLSVNE (188 aa)). The Nucleophile role is filled by Cys269. The L-glutamine site is built by Leu270, Gln273, Asn311, Gly313, and Phe314. Residues His353 and Glu355 contribute to the active site.

Belongs to the CarA family. In terms of assembly, composed of two chains; the small (or glutamine) chain promotes the hydrolysis of glutamine to ammonia, which is used by the large (or ammonia) chain to synthesize carbamoyl phosphate. Tetramer of heterodimers (alpha,beta)4.

The enzyme catalyses hydrogencarbonate + L-glutamine + 2 ATP + H2O = carbamoyl phosphate + L-glutamate + 2 ADP + phosphate + 2 H(+). It catalyses the reaction L-glutamine + H2O = L-glutamate + NH4(+). Its pathway is amino-acid biosynthesis; L-arginine biosynthesis; carbamoyl phosphate from bicarbonate: step 1/1. It participates in pyrimidine metabolism; UMP biosynthesis via de novo pathway; (S)-dihydroorotate from bicarbonate: step 1/3. Small subunit of the glutamine-dependent carbamoyl phosphate synthetase (CPSase). CPSase catalyzes the formation of carbamoyl phosphate from the ammonia moiety of glutamine, carbonate, and phosphate donated by ATP, constituting the first step of 2 biosynthetic pathways, one leading to arginine and/or urea and the other to pyrimidine nucleotides. The small subunit (glutamine amidotransferase) binds and cleaves glutamine to supply the large subunit with the substrate ammonia. The polypeptide is Carbamoyl phosphate synthase small chain (Photobacterium profundum (strain SS9)).